A 538-amino-acid polypeptide reads, in one-letter code: Phosphoenolpyruvate carboxykinase (ATP) (538 aa).

Arg-64 contacts substrate. Positions 149 and 151 each coordinate Ca(2+). 2 residues coordinate substrate: Tyr-206 and Lys-212. Residues Lys-212, His-231, and 247–255 contribute to the ATP site; that span reads GLSGTGKTT. Residues Lys-212 and His-231 each coordinate Mn(2+). Asp-268 lines the Mn(2+) pocket. Residues Glu-296, Arg-332, 447–448, and Thr-453 contribute to the ATP site; that span reads RI. Arg-332 lines the substrate pocket.

This sequence belongs to the phosphoenolpyruvate carboxykinase (ATP) family. As to quaternary structure, monomer. Mn(2+) serves as cofactor.

It localises to the cytoplasm. The enzyme catalyses oxaloacetate + ATP = phosphoenolpyruvate + ADP + CO2. It participates in carbohydrate biosynthesis; gluconeogenesis. Allosterically activated by calcium. Involved in the gluconeogenesis. Catalyzes the conversion of oxaloacetate (OAA) to phosphoenolpyruvate (PEP) through direct phosphoryl transfer between the nucleoside triphosphate and OAA. This is Phosphoenolpyruvate carboxykinase (ATP) from Salmonella typhimurium (strain LT2 / SGSC1412 / ATCC 700720).